Reading from the N-terminus, the 235-residue chain is Phosphoribosylaminoimidazole-succinocarboxamide synthase (235 aa).

This sequence belongs to the SAICAR synthetase family.

It carries out the reaction 5-amino-1-(5-phospho-D-ribosyl)imidazole-4-carboxylate + L-aspartate + ATP = (2S)-2-[5-amino-1-(5-phospho-beta-D-ribosyl)imidazole-4-carboxamido]succinate + ADP + phosphate + 2 H(+). Its pathway is purine metabolism; IMP biosynthesis via de novo pathway; 5-amino-1-(5-phospho-D-ribosyl)imidazole-4-carboxamide from 5-amino-1-(5-phospho-D-ribosyl)imidazole-4-carboxylate: step 1/2. The polypeptide is Phosphoribosylaminoimidazole-succinocarboxamide synthase (Clostridium perfringens (strain SM101 / Type A)).